The chain runs to 117 residues: Ig heavy chain V region 5-84 (117 aa).

The first 19 residues, Met1–Cys19, serve as a signal peptide directing secretion. The framework-1 stretch occupies residues Glu20 to Ser49. Cys41 and Cys115 are oxidised to a cystine. The complementarity-determining-1 stretch occupies residues Ser50–Ser54. A framework-2 region spans residues Trp55–Ala68. The tract at residues Tyr69–Gly85 is complementarity-determining-2. The interval Arg86–Arg117 is framework-3.

This chain is Ig heavy chain V region 5-84, found in Mus musculus (Mouse).